The sequence spans 626 residues: Alpha terpineol synthase, chloroplastic (626 aa).

A chloroplast-targeting transit peptide spans 1-38 (MALLSVAPLASKSRLHKTLITSAHHLKPSPTTIPTLPV). Residues D377, D381, and D529 each contribute to the Mg(2+) site. The DDXXD motif motif lies at 377 to 381 (DDIYD).

It belongs to the terpene synthase family. Tpsd subfamily. It depends on Mg(2+) as a cofactor. Mn(2+) serves as cofactor.

The protein resides in the plastid. It is found in the chloroplast. The enzyme catalyses (2E)-geranyl diphosphate + H2O = (S)-alpha-terpineol + diphosphate. It catalyses the reaction (2E)-geranyl diphosphate + H2O = (R)-alpha-terpineol + diphosphate. The catalysed reaction is (2E)-geranyl diphosphate + H2O = (2E)-geraniol + diphosphate. It carries out the reaction (2E)-geranyl diphosphate = terpinolene + diphosphate. The enzyme catalyses (2E)-geranyl diphosphate = (4S)-limonene + diphosphate. Its pathway is terpene metabolism; oleoresin biosynthesis. It functions in the pathway secondary metabolite biosynthesis; terpenoid biosynthesis. Monoterpene synthase (TPS) involved in the biosynthesis of monoterpene natural products included in conifer oleoresin secretions and volatile emissions; these compounds contribute to biotic and abiotic stress defense against herbivores and pathogens. Catalyzes the conversion of (2E)-geranyl diphosphate (GPP) to (-)-alpha-terpineol, (+)-alpha-terpineol and terpin-4-ol, and, to a lower extent, to geraniol, terpinolene and (-)-limonene. This Pinus banksiana (Jack pine) protein is Alpha terpineol synthase, chloroplastic.